We begin with the raw amino-acid sequence, 745 residues long: Capsid protein (745 aa).

Disordered stretches follow at residues 23–44 (RRPLRRRRAGRPARRYRRRRTV), 598–619 (PCKTDGRPTDSDRHPRGIQVAD), and 660–700 (QPKR…EQAT). Basic and acidic residues-rich tracts occupy residues 599–612 (CKTDGRPTDSDRHP) and 675–691 (GEFREPEKGSYSEEERS).

It belongs to the anelloviridae capsid protein family.

The protein resides in the virion. Functionally, self assemble to form an icosahedral capsid. The chain is Capsid protein from Homo sapiens (Human).